The primary structure comprises 305 residues: tRNA dimethylallyltransferase (305 aa).

9–16 (GPTGAGKT) serves as a coordination point for ATP. Residue 11–16 (TGAGKT) participates in substrate binding. Interaction with substrate tRNA regions lie at residues 34–37 (DSRQ) and 158–162 (QRIVR).

This sequence belongs to the IPP transferase family. As to quaternary structure, monomer. Mg(2+) is required as a cofactor.

It carries out the reaction adenosine(37) in tRNA + dimethylallyl diphosphate = N(6)-dimethylallyladenosine(37) in tRNA + diphosphate. In terms of biological role, catalyzes the transfer of a dimethylallyl group onto the adenine at position 37 in tRNAs that read codons beginning with uridine, leading to the formation of N6-(dimethylallyl)adenosine (i(6)A). The protein is tRNA dimethylallyltransferase of Oleidesulfovibrio alaskensis (strain ATCC BAA-1058 / DSM 17464 / G20) (Desulfovibrio alaskensis).